A 762-amino-acid chain; its full sequence is Probable disease resistance protein At1g61300 (762 aa).

The N-myristoyl glycine moiety is linked to residue glycine 2. S-palmitoyl cysteine attachment occurs at residues cysteine 3 and cysteine 4. The NB-ARC domain maps to 26-329; it reads NINRNSFGVE…CEGFIGEDQV (304 aa). 68–75 contributes to the ATP binding site; it reads GMGGVGKT. 5 LRR repeats span residues 401–422, 423–444, 447–470, 471–493, and 494–516; these read AVRRMSLMDNHIEEITCESKCS, ELTTLFLQSNQLKNLSGEFIRY, KLVVLDLSYNRDFNKLPEQISGLV, SLQFLDLSNTSIKQLPVGLKKLK, and KLTFLNLAYTVRLCSISGISRLL.

This sequence belongs to the disease resistance NB-LRR family.

The protein resides in the cell membrane. Functionally, probable disease resistance protein. The chain is Probable disease resistance protein At1g61300 from Arabidopsis thaliana (Mouse-ear cress).